A 248-amino-acid chain; its full sequence is MRTPIIAGNWKMHYTIDEAVKLVEELKPLVKDAKCEVVVCPTFVCLDAVKKAVEGTNIKVGAQNMHFEEKGAFTGEIAPRMLEAMNIDYVIIGHSERREYFNETDETCNKKVKAAFAHNLTPILCCGETLEQRENGTTNDVIKAQITADLEGLTKEQAEKVVIAYEPIWAIGTGKTATSDQANETIAAIRAMVAEMFGQEVADKVRIQYGGSVKPNTIAEQMAKSDIDGALVGGASLVAADFAQIVNY.

9-11 serves as a coordination point for substrate; it reads NWK. His94 functions as the Electrophile in the catalytic mechanism. Glu166 (proton acceptor) is an active-site residue. Residues Gly172, Ser212, and 233-234 contribute to the substrate site; that span reads GG.

It belongs to the triosephosphate isomerase family. In terms of assembly, homodimer.

It localises to the cytoplasm. It catalyses the reaction D-glyceraldehyde 3-phosphate = dihydroxyacetone phosphate. It functions in the pathway carbohydrate biosynthesis; gluconeogenesis. The protein operates within carbohydrate degradation; glycolysis; D-glyceraldehyde 3-phosphate from glycerone phosphate: step 1/1. Its function is as follows. Involved in the gluconeogenesis. Catalyzes stereospecifically the conversion of dihydroxyacetone phosphate (DHAP) to D-glyceraldehyde-3-phosphate (G3P). This chain is Triosephosphate isomerase, found in Clostridium perfringens (strain ATCC 13124 / DSM 756 / JCM 1290 / NCIMB 6125 / NCTC 8237 / Type A).